Reading from the N-terminus, the 145-residue chain is Large ribosomal subunit protein uL15 (145 aa).

The tract at residues methionine 1–glutamate 50 is disordered. Residues arginine 20–serine 30 are compositionally biased toward gly residues.

The protein belongs to the universal ribosomal protein uL15 family. In terms of assembly, part of the 50S ribosomal subunit.

Binds to the 23S rRNA. The polypeptide is Large ribosomal subunit protein uL15 (Aster yellows witches'-broom phytoplasma (strain AYWB)).